The following is a 432-amino-acid chain: Adenosylhomocysteinase (432 aa).

S2 is subject to N-acetylserine. The substrate site is built by T57, D131, and E156. S183 bears the Phosphoserine mark. The segment at 183-350 (SVTKSKFDNL…EGRLVNLGCA (168 aa)) is NAD binding. Residues K186 and D190 each contribute to the substrate site. The residue at position 186 (K186) is an N6-(2-hydroxyisobutyryl)lysine. Y193 carries the post-translational modification Phosphotyrosine.

The protein belongs to the adenosylhomocysteinase family. As to quaternary structure, homotetramer. Interaction with AHCYL1. It depends on NAD(+) as a cofactor.

Its subcellular location is the cytoplasm. The protein localises to the melanosome. The protein resides in the nucleus. It is found in the endoplasmic reticulum. The catalysed reaction is S-adenosyl-L-homocysteine + H2O = L-homocysteine + adenosine. It functions in the pathway amino-acid biosynthesis; L-homocysteine biosynthesis; L-homocysteine from S-adenosyl-L-homocysteine: step 1/1. Functionally, catalyzes the hydrolysis of S-adenosyl-L-homocysteine to form adenosine and homocysteine. Binds copper ions. The sequence is that of Adenosylhomocysteinase (AHCY) from Bos taurus (Bovine).